Reading from the N-terminus, the 1722-residue chain is Signal-induced proliferation-associated 1-like protein 2 (1722 aa).

2 disordered regions span residues 1–29 (MSDPRPSQAEKHKLGRAASKFKDPSRAMQ) and 45–73 (MGPATLNTSSLSEGGGGGGGPANGTPAVP). Residues 57 to 66 (EGGGGGGGPA) show a composition bias toward gly residues. Phosphoserine occurs at positions 149, 380, and 384. The disordered stretch occupies residues 362-404 (ASAASQTPVPVGPAGGCESPLGSKEDLNAKENPDADEGDGKSN). Over residues 384-403 (SKEDLNAKENPDADEGDGKS) the composition is skewed to basic and acidic residues. Residues 596 to 813 (LLKLDEQGLS…RTRHEYLKDL (218 aa)) form the Rap-GAP domain. In terms of domain architecture, PDZ spans 951 to 1027 (EMTLRRNGLG…VKVVIIQPHE (77 aa)). S1030 bears the Phosphoserine mark. Disordered stretches follow at residues 1068 to 1172 (HRVP…DHED), 1197 to 1246 (ERAL…FGSG), and 1328 to 1361 (AADGSMGDLSEVSSHSSGSHRSGSPSTHCSKSTG). Composition is skewed to low complexity over residues 1091 to 1103 (LQCQPLLQQAQAA) and 1120 to 1131 (SSPSNQSSSSDP). Residues 1197–1218 (ERALQKDGSCKDSPNKLSHIGD) are compositionally biased toward basic and acidic residues. Low complexity predominate over residues 1220-1237 (SCSSHSSSNTLSSNTSSN). Residue S1245 is modified to Phosphoserine. The span at 1328 to 1355 (AADGSMGDLSEVSSHSSGSHRSGSPSTH) shows a compositional bias: low complexity. 7 positions are modified to phosphoserine: S1461, S1472, S1478, S1488, S1549, S1552, and S1591. Residues 1652–1712 (STLTGKVNQL…ATAQLRTFTE (61 aa)) adopt a coiled-coil conformation.

In Rattus norvegicus (Rat), this protein is Signal-induced proliferation-associated 1-like protein 2 (Sipa1l2).